The primary structure comprises 804 residues: Exocyst complex component 6 (804 aa).

Belongs to the SEC15 family. As to quaternary structure, the exocyst complex is composed of EXOC1, EXOC2, EXOC3, EXOC4, EXOC5, EXOC6, EXOC7 and EXOC8. Interacts with CNTRL. Interacts with RAB11A in a GTP-dependent manner.

The protein localises to the cytoplasm. It localises to the perinuclear region. Its subcellular location is the cell projection. It is found in the growth cone. The protein resides in the midbody. The protein localises to the midbody ring. Its function is as follows. Component of the exocyst complex involved in the docking of exocytic vesicles with fusion sites on the plasma membrane. Together with RAB11A, RAB3IP, RAB8A, PARD3, PRKCI, ANXA2, CDC42 and DNMBP promotes transcytosis of PODXL to the apical membrane initiation sites (AMIS), apical surface formation and lumenogenesis. The chain is Exocyst complex component 6 (EXOC6) from Homo sapiens (Human).